The primary structure comprises 432 residues: Histidine--tRNA ligase (432 aa).

This sequence belongs to the class-II aminoacyl-tRNA synthetase family.

Its subcellular location is the cytoplasm. It catalyses the reaction tRNA(His) + L-histidine + ATP = L-histidyl-tRNA(His) + AMP + diphosphate + H(+). This chain is Histidine--tRNA ligase, found in Halobacterium salinarum (strain ATCC 29341 / DSM 671 / R1).